Reading from the N-terminus, the 70-residue chain is Conotoxin Lt11.2 (70 aa).

The signal sequence occupies residues Met1–Ala26. Cystine bridges form between Cys27–Cys41, Cys34–Cys46, Cys40–Cys50, and Cys45–Cys54. Pro57 is modified (proline amide). The propeptide occupies Glu61 to Arg70.

It belongs to the conotoxin I2 superfamily. In terms of tissue distribution, expressed by the venom duct.

It is found in the secreted. In Conus litteratus (Lettered cone), this protein is Conotoxin Lt11.2.